Here is a 125-residue protein sequence, read N- to C-terminus: Histone H2A (125 aa).

Basic residues predominate over residues 1–18; sequence MSGRGKGGKAKAKAKSRS. The segment at 1–21 is disordered; it reads MSGRGKGGKAKAKAKSRSSRA. An N-acetylserine modification is found at Ser2. An N5-methylglutamine modification is found at Gln104.

It belongs to the histone H2A family. The nucleosome is a histone octamer containing two molecules each of H2A, H2B, H3 and H4 assembled in one H3-H4 heterotetramer and two H2A-H2B heterodimers. The octamer wraps approximately 147 bp of DNA.

It is found in the nucleus. It localises to the chromosome. In terms of biological role, core component of nucleosome. Nucleosomes wrap and compact DNA into chromatin, limiting DNA accessibility to the cellular machineries which require DNA as a template. Histones thereby play a central role in transcription regulation, DNA repair, DNA replication and chromosomal stability. DNA accessibility is regulated via a complex set of post-translational modifications of histones, also called histone code, and nucleosome remodeling. The protein is Histone H2A of Mytilus californianus (California mussel).